We begin with the raw amino-acid sequence, 195 residues long: Imidazoleglycerol-phosphate dehydratase (195 aa).

This sequence belongs to the imidazoleglycerol-phosphate dehydratase family.

It is found in the cytoplasm. The catalysed reaction is D-erythro-1-(imidazol-4-yl)glycerol 3-phosphate = 3-(imidazol-4-yl)-2-oxopropyl phosphate + H2O. Its pathway is amino-acid biosynthesis; L-histidine biosynthesis; L-histidine from 5-phospho-alpha-D-ribose 1-diphosphate: step 6/9. The polypeptide is Imidazoleglycerol-phosphate dehydratase (Burkholderia mallei (strain NCTC 10247)).